We begin with the raw amino-acid sequence, 66 residues long: Protein KleD (66 aa).

Positions 33–52 (VAVRSGNEWQQVTKWVEPAR) form a DNA-binding region, H-T-H motif.

The sequence is that of Protein KleD (kleD) from Escherichia coli.